The sequence spans 65 residues: Large ribosomal subunit protein bL35 (65 aa).

The segment at Met1 to Phe22 is disordered. The span at Ala10–Phe22 shows a compositional bias: basic residues.

The protein belongs to the bacterial ribosomal protein bL35 family.

The sequence is that of Large ribosomal subunit protein bL35 from Escherichia coli O127:H6 (strain E2348/69 / EPEC).